Consider the following 422-residue polypeptide: Hexuronate transporter (422 aa).

11 consecutive transmembrane segments (helical) span residues 9-29, 45-65, 82-102, 141-161, 163-183, 219-239, 256-276, 294-314, 321-341, 356-376, and 381-401; these read VILFLFLAGVINYLDRSALSI, MGLIFSSFSIGYAIFNFLGGV, VWSLFSGAVALAFGFVSLLII, TPLGGAISGPIVGMIAVAFSW, VSFVLIMIIGLIWAVLWFKFV, LFTAFAFFAYNYILFFFLTWF, VITVIPWILGFIGLAAGGFVS, VVLVTCLFSSAVLIGFAGLVA, TLVALSVFFLYLTGAIYWAVI, FMHFLANTAGIIGPALTGFIV, and TFSGAFLLAGGLAVFASLAVI.

The protein belongs to the major facilitator superfamily. Phthalate permease family.

Its subcellular location is the cell membrane. The catalysed reaction is aldehydo-D-glucuronate(in) + H(+)(in) = aldehydo-D-glucuronate(out) + H(+)(out). The enzyme catalyses aldehydo-D-galacturonate(out) + H(+)(out) = aldehydo-D-galacturonate(in) + H(+)(in). Its function is as follows. Transport of aldohexuronates such as D-glucuronate and D-galacturonate. This chain is Hexuronate transporter, found in Bacillus subtilis (strain 168).